Here is a 237-residue protein sequence, read N- to C-terminus: Neural retina-specific leucine zipper protein (237 aa).

Glycyl lysine isopeptide (Lys-Gly) (interchain with G-Cter in SUMO) cross-links involve residues Lys20 and Lys24. The interval 23–57 (VKREPSEGRPGPPTASLGSTPYSSVPPSPTFSEPG) is disordered. Residues 30 to 93 (GRPGPPTASL…AGEALGLSPE (64 aa)) are minimal transactivation domain (MTD). The basic motif stretch occupies residues 159 to 185 (RLKQRRRTLKNRGYAQACRSKRLQQRR). One can recognise a bZIP domain in the interval 159–222 (RLKQRRRTLK…DLYKARCDRL (64 aa)). The segment at 187 to 208 (LEAERARLAAQLDALRAEVARL) is leucine-zipper.

This sequence belongs to the bZIP family. Interacts with FIZ1; this interaction represses transactivation. Interacts (via the leucine-zipper domain) with CRX. Phosphorylated. Post-translationally, disumoylated at Lys-20. Sumoylation modulates the transcriptional activity of NRL on RHO and NR2E3 promoters, and is required for normal rod differentiation. Expressed in the brain and the retina. Expressed strongly in rod and cone cells (at protein level).

It is found in the cytoplasm. The protein resides in the nucleus. Acts as a transcriptional activator which regulates the expression of several rod-specific genes, including RHO and PDE6B. Also functions as a transcriptional coactivator, stimulating transcription mediated by the transcription factor CRX and NR2E3. Binds to the rhodopsin promoter in a sequence-specific manner. The sequence is that of Neural retina-specific leucine zipper protein (NRL) from Homo sapiens (Human).